Reading from the N-terminus, the 114-residue chain is Fumarate reductase subunit D (114 aa).

The next 3 membrane-spanning stretches (helical) occupy residues 27–47 (ICFP…LIPM), 50–70 (IIVF…TIFP), and 94–114 (WLFY…VIAL).

This sequence belongs to the FrdD family. Part of an enzyme complex containing four subunits: a flavoprotein (FrdA), an iron-sulfur protein (FrdB), and two hydrophobic anchor proteins (FrdC and FrdD).

The protein resides in the cell inner membrane. Its function is as follows. Anchors the catalytic components of the fumarate reductase complex to the cell membrane, binds quinones. In Haemophilus ducreyi (strain 35000HP / ATCC 700724), this protein is Fumarate reductase subunit D.